The chain runs to 237 residues: Protein FEV (237 aa).

The ETS DNA-binding region spans 47–127 (IQLWQFLLEL…HGKRYAYRFD (81 aa)). The segment at 129–237 (QGLAQACQPP…AASHLGGHYH (109 aa)) is may mediate active transcriptional repression.

The protein belongs to the ETS family. Expressed in central serotonergic neurons.

It is found in the nucleus. Functions as a transcriptional regulator. May function as a transcriptional repressor. Functions in the differentiation and the maintenance of the central serotonergic neurons. May play a role in cell growth. This Mus musculus (Mouse) protein is Protein FEV (Fev).